The primary structure comprises 214 residues: GTP cyclohydrolase 1 (214 aa).

Zn(2+) contacts are provided by C101, H104, and C172.

It belongs to the GTP cyclohydrolase I family. Toroid-shaped homodecamer, composed of two pentamers of five dimers.

It carries out the reaction GTP + H2O = 7,8-dihydroneopterin 3'-triphosphate + formate + H(+). It participates in cofactor biosynthesis; 7,8-dihydroneopterin triphosphate biosynthesis; 7,8-dihydroneopterin triphosphate from GTP: step 1/1. This is GTP cyclohydrolase 1 from Gloeobacter violaceus (strain ATCC 29082 / PCC 7421).